Consider the following 295-residue polypeptide: Indole-3-glycerol phosphate synthase (295 aa).

It belongs to the TrpC family.

It catalyses the reaction 1-(2-carboxyphenylamino)-1-deoxy-D-ribulose 5-phosphate + H(+) = (1S,2R)-1-C-(indol-3-yl)glycerol 3-phosphate + CO2 + H2O. The protein operates within amino-acid biosynthesis; L-tryptophan biosynthesis; L-tryptophan from chorismate: step 4/5. This chain is Indole-3-glycerol phosphate synthase, found in Prochlorococcus marinus (strain NATL1A).